The chain runs to 231 residues: AA9 family lytic polysaccharide monooxygenase C (231 aa).

A signal peptide spans 1 to 18 (MKSGLLFTTASLALTASA). Position 19 (histidine 19) interacts with Cu(2+). A disulfide bridge links cysteine 60 with cysteine 179. Asparagine 69 and asparagine 143 each carry an N-linked (GlcNAc...) asparagine glycan. 2 residues coordinate O2: histidine 165 and glutamine 174. Position 176 (tyrosine 176) interacts with Cu(2+).

This sequence belongs to the polysaccharide monooxygenase AA9 family. It depends on Cu(2+) as a cofactor.

The protein localises to the secreted. The enzyme catalyses [(1-&gt;4)-beta-D-glucosyl]n+m + reduced acceptor + O2 = 4-dehydro-beta-D-glucosyl-[(1-&gt;4)-beta-D-glucosyl]n-1 + [(1-&gt;4)-beta-D-glucosyl]m + acceptor + H2O.. Lytic polysaccharide monooxygenase (LPMO) that depolymerizes crystalline and amorphous polysaccharides via the oxidation of scissile alpha- or beta-(1-4)-glycosidic bonds, yielding C1 oxidation products. Catalysis by LPMOs requires the reduction of the active-site copper from Cu(II) to Cu(I) by a reducing agent and H(2)O(2) or O(2) as a cosubstrate. The polypeptide is AA9 family lytic polysaccharide monooxygenase C (Emericella nidulans (strain FGSC A4 / ATCC 38163 / CBS 112.46 / NRRL 194 / M139) (Aspergillus nidulans)).